We begin with the raw amino-acid sequence, 440 residues long: Ribulose bisphosphate carboxylase large chain (440 aa).

Lys-4 carries the N6,N6,N6-trimethyllysine modification. The substrate site is built by Asn-113 and Thr-163. The active-site Proton acceptor is the Lys-165. Lys-167 lines the substrate pocket. Positions 191, 193, and 194 each coordinate Mg(2+). Residue Lys-191 is modified to N6-carboxylysine. Catalysis depends on His-284, which acts as the Proton acceptor. The substrate site is built by Arg-285, His-317, and Ser-369.

It belongs to the RuBisCO large chain family. Type I subfamily. Heterohexadecamer of 8 large chains and 8 small chains; disulfide-linked. The disulfide link is formed within the large subunit homodimers. Mg(2+) is required as a cofactor. Post-translationally, the disulfide bond which can form in the large chain dimeric partners within the hexadecamer appears to be associated with oxidative stress and protein turnover.

It is found in the plastid. It localises to the chloroplast. The enzyme catalyses 2 (2R)-3-phosphoglycerate + 2 H(+) = D-ribulose 1,5-bisphosphate + CO2 + H2O. It catalyses the reaction D-ribulose 1,5-bisphosphate + O2 = 2-phosphoglycolate + (2R)-3-phosphoglycerate + 2 H(+). RuBisCO catalyzes two reactions: the carboxylation of D-ribulose 1,5-bisphosphate, the primary event in carbon dioxide fixation, as well as the oxidative fragmentation of the pentose substrate in the photorespiration process. Both reactions occur simultaneously and in competition at the same active site. The polypeptide is Ribulose bisphosphate carboxylase large chain (Ptychomitrium gardneri (Gardner's ptychomitrium moss)).